Reading from the N-terminus, the 233-residue chain is Uridylate kinase (233 aa).

ATP-binding positions include 8 to 11, G51, and R55; that span reads KLSG. UMP contacts are provided by residues D68 and 129-136; that span reads TSNPFFTT. ATP is bound by residues T156, Y162, and D165.

This sequence belongs to the UMP kinase family. In terms of assembly, homohexamer.

It is found in the cytoplasm. The catalysed reaction is UMP + ATP = UDP + ADP. Its pathway is pyrimidine metabolism; CTP biosynthesis via de novo pathway; UDP from UMP (UMPK route): step 1/1. With respect to regulation, inhibited by UTP. Its function is as follows. Catalyzes the reversible phosphorylation of UMP to UDP. This chain is Uridylate kinase, found in Thermosipho melanesiensis (strain DSM 12029 / CIP 104789 / BI429).